A 445-amino-acid chain; its full sequence is tRNA modification GTPase MnmE (445 aa).

Positions 24, 81, and 121 each coordinate (6S)-5-formyl-5,6,7,8-tetrahydrofolate. One can recognise a TrmE-type G domain in the interval 218–369 (GLTVVIAGPP…LLEALVGFAR (152 aa)). GTP-binding positions include 228–233 (NAGKST), 247–253 (SPHAGTT), 272–275 (DTAG), and 350–352 (SAR). The Mg(2+) site is built by serine 232 and threonine 253. Lysine 445 lines the (6S)-5-formyl-5,6,7,8-tetrahydrofolate pocket.

The protein belongs to the TRAFAC class TrmE-Era-EngA-EngB-Septin-like GTPase superfamily. TrmE GTPase family. In terms of assembly, homodimer. Heterotetramer of two MnmE and two MnmG subunits. The cofactor is K(+).

The protein resides in the cytoplasm. Functionally, exhibits a very high intrinsic GTPase hydrolysis rate. Involved in the addition of a carboxymethylaminomethyl (cmnm) group at the wobble position (U34) of certain tRNAs, forming tRNA-cmnm(5)s(2)U34. This Bradyrhizobium sp. (strain BTAi1 / ATCC BAA-1182) protein is tRNA modification GTPase MnmE.